The primary structure comprises 469 residues: MSAKPTTLYDKIWNDHLVHEAEDGTCLLYIDRHLVHEVTSPQAFEGLRTAGRKVHAPEKTLAVVDHNVPTTDRSKPNPDPESAEQIAALAENARDFGITYYNEFDKRQGVVHVIGPEQGFTLPGTTIVCGDSHTSTHGAFGALAHGIGTSEVEHVLATQTLIQKKAKNMRVTVDGQLPDGVTAKDVILAIIGEIGTAGGTGYVLEYAGDAIRSLSMEGRMTVCNMSIEGGARAGLIAPDAKAYEFLKGRPLAPKGEAWDAALRYWETLRSDDGAHFDHELKLDAAALPPIVTWGTSPEDVISVTGRVPNPADIADEAKRLSKERALAYMGLTPGTKITDIKIDRMFIGSCTNGRIEDLRAAAKVAEGKTVNANVNAIIVPGSGLVKEQAEAEGLDKIFIKAGFEWREPGCSMCLAMNPDKLAPEERCASTSNRNFEGRQGFKGRTHLVSPAMAAAAAIAGHFVDIRDWH.

Residues C350, C410, and C413 each coordinate [4Fe-4S] cluster.

Belongs to the aconitase/IPM isomerase family. LeuC type 1 subfamily. As to quaternary structure, heterodimer of LeuC and LeuD. [4Fe-4S] cluster serves as cofactor.

The enzyme catalyses (2R,3S)-3-isopropylmalate = (2S)-2-isopropylmalate. It functions in the pathway amino-acid biosynthesis; L-leucine biosynthesis; L-leucine from 3-methyl-2-oxobutanoate: step 2/4. Catalyzes the isomerization between 2-isopropylmalate and 3-isopropylmalate, via the formation of 2-isopropylmaleate. The chain is 3-isopropylmalate dehydratase large subunit from Rhodopseudomonas palustris (strain TIE-1).